A 231-amino-acid chain; its full sequence is NADH-ubiquinone oxidoreductase chain 4 (231 aa).

The next 6 membrane-spanning stretches (helical) occupy residues 1-21 (PIAG…YGII), 34-54 (VFLP…LTCL), 61-80 (SLIA…AIMI), 84-106 (WGLS…LFCL), 118-138 (ILIL…WWLL), and 169-189 (TIIL…HMFL).

Belongs to the complex I subunit 4 family.

The protein resides in the mitochondrion membrane. It carries out the reaction a ubiquinone + NADH + 5 H(+)(in) = a ubiquinol + NAD(+) + 4 H(+)(out). In terms of biological role, core subunit of the mitochondrial membrane respiratory chain NADH dehydrogenase (Complex I) that is believed to belong to the minimal assembly required for catalysis. Complex I functions in the transfer of electrons from NADH to the respiratory chain. The immediate electron acceptor for the enzyme is believed to be ubiquinone. The sequence is that of NADH-ubiquinone oxidoreductase chain 4 (MT-ND4) from Porthidium nasutum (Hognosed pitviper).